The primary structure comprises 359 residues: Putative plant UBX domain-containing protein 15 (359 aa).

The UBX domain maps to 277–357 (DRSVVCSISV…GIANSIISVT (81 aa)).

This chain is Putative plant UBX domain-containing protein 15, found in Arabidopsis thaliana (Mouse-ear cress).